Reading from the N-terminus, the 681-residue chain is Protein asunder (681 aa).

Positions 574 to 619 (PGASHLRSYTESPLSPERLEPTSSASNSSSSILKASKRRMSSSGQR) are disordered. A Nuclear localization signal (NLS) motif is present at residues 606-612 (LKASKRR).

It belongs to the Integrator subunit 13 family. Belongs to the multiprotein complex Integrator, at least composed of IntS1, IntS2, IntS3, IntS4, omd/IntS5, IntS6, defl/IntS7, IntS8, IntS9, IntS10, IntS11, IntS12, asun/IntS13, IntS14 and IntS15. The core complex associates with protein phosphatase 2A subunits mts/PP2A and Pp2A-29B, to form the Integrator-PP2A (INTAC) complex. In terms of processing, phosphorylated.

Its subcellular location is the nucleus. It localises to the cytoplasm. The protein resides in the perinuclear region. Component of the integrator complex, a multiprotein complex that terminates RNA polymerase II (Pol II) transcription in the promoter-proximal region of genes. The integrator complex provides a quality checkpoint during transcription elongation by driving premature transcription termination of transcripts that are unfavorably configured for transcriptional elongation: the complex terminates transcription by (1) catalyzing dephosphorylation of the C-terminal domain (CTD) of Pol II subunit Polr2A/Rbp1 and Spt5, and (2) degrading the exiting nascent RNA transcript via endonuclease activity. The integrator complex is also involved in the 3'-end processing of the U7 snRNA, and also the spliceosomal snRNAs U1, U2, U4 and U5. In Drosophila virilis (Fruit fly), this protein is Protein asunder (asun).